The sequence spans 226 residues: MEPKHPEITIVLATGNKDKVRELKPVLEALASGIHVRSLHDLGLDIDVEETEPTLEGNARLKADAIFELVAPRLDWFIALADDTGLEVDALGGAPGVYSARYAPVPEGVARTYEDNVRHLLSEMRGKSKRTARFRTVIAMKGRLPAANGSAVEIEETTDGHIDGLITTEPKGNGGFGYDPVFAPEGMDRTFAQLGIDEKNAISHRGRAVVAAAKRIGEYLSQCGIQ.

14-19 contributes to the substrate binding site; it reads TGNKDK. The Mg(2+) site is built by glutamate 49 and aspartate 83. Aspartate 83 (proton acceptor) is an active-site residue. Substrate contacts are provided by residues threonine 84, 176–179, lysine 199, and 204–205; these read FGYD and HR.

It belongs to the HAM1 NTPase family. Homodimer. Mg(2+) is required as a cofactor.

It carries out the reaction XTP + H2O = XMP + diphosphate + H(+). The catalysed reaction is dITP + H2O = dIMP + diphosphate + H(+). The enzyme catalyses ITP + H2O = IMP + diphosphate + H(+). Its function is as follows. Pyrophosphatase that catalyzes the hydrolysis of nucleoside triphosphates to their monophosphate derivatives, with a high preference for the non-canonical purine nucleotides XTP (xanthosine triphosphate), dITP (deoxyinosine triphosphate) and ITP. Seems to function as a house-cleaning enzyme that removes non-canonical purine nucleotides from the nucleotide pool, thus preventing their incorporation into DNA/RNA and avoiding chromosomal lesions. This chain is dITP/XTP pyrophosphatase, found in Chlorobaculum tepidum (strain ATCC 49652 / DSM 12025 / NBRC 103806 / TLS) (Chlorobium tepidum).